The primary structure comprises 245 residues: 1-(5-phosphoribosyl)-5-[(5-phosphoribosylamino)methylideneamino] imidazole-4-carboxamide isomerase (245 aa).

D7 functions as the Proton acceptor in the catalytic mechanism. The active-site Proton donor is D129.

The protein belongs to the HisA/HisF family.

It localises to the cytoplasm. The enzyme catalyses 1-(5-phospho-beta-D-ribosyl)-5-[(5-phospho-beta-D-ribosylamino)methylideneamino]imidazole-4-carboxamide = 5-[(5-phospho-1-deoxy-D-ribulos-1-ylimino)methylamino]-1-(5-phospho-beta-D-ribosyl)imidazole-4-carboxamide. The protein operates within amino-acid biosynthesis; L-histidine biosynthesis; L-histidine from 5-phospho-alpha-D-ribose 1-diphosphate: step 4/9. This is 1-(5-phosphoribosyl)-5-[(5-phosphoribosylamino)methylideneamino] imidazole-4-carboxamide isomerase from Shigella flexneri serotype 5b (strain 8401).